A 238-amino-acid polypeptide reads, in one-letter code: Aerobic respiration control protein ArcA (238 aa).

Residues 5–118 (HILIVEDELV…ELTIRARNLL (114 aa)) form the Response regulatory domain. A 4-aspartylphosphate modification is found at Asp54. Residues 134–234 (VESYKFNGWE…IHGEGYRFCG (101 aa)) constitute a DNA-binding region (ompR/PhoB-type).

Post-translationally, phosphorylated by ArcB.

It localises to the cytoplasm. Member of the two-component regulatory system ArcB/ArcA. Represses a wide variety of aerobic enzymes under anaerobic conditions. It may also be involved in the osmoregulation of envelope proteins. When activated by ArcB, it negatively regulates the expression of genes of aerobic function. Activates the transcription of the plfB operon by binding to its promoter. The chain is Aerobic respiration control protein ArcA (arcA) from Escherichia coli O157:H7.